The sequence spans 451 residues: F-box/LRR-repeat protein 13 (451 aa).

The 54-residue stretch at 17-70 (VDWISKLPDCLLCEVLLNLPTKDVVKTSVLSRRWRNLWKHVPGLDLDNTDFQEF) folds into the F-box domain. 4 LRR repeats span residues 128-155 (DDSYGSWEVQLPSSIYTCESLVSLKLCG), 177-202 (TKFADDMGLETLITKCPVLESLTIER), 224-251 (VADSDEGVVEDLVVSIDAPKLEYLRLSD), and 335-363 (CVEFYGYMWEMLPIFLESCPNLKTLVVKS). An FBD domain is found at 370–421 (GENIILPGPRRFLSSLEYVKIERPLKGEAMEMKLVSYLLENSTILKKLTLCL).

The chain is F-box/LRR-repeat protein 13 (FBL13) from Arabidopsis thaliana (Mouse-ear cress).